Reading from the N-terminus, the 501-residue chain is 4,4'-diapophytoene desaturase (4,4'-diaponeurosporene-forming) (501 aa).

Val5–Ala17 provides a ligand contact to FAD.

It belongs to the carotenoid/retinoid oxidoreductase family. CrtN subfamily.

The enzyme catalyses 15-cis-4,4'-diapophytoene + 3 FAD + 3 H(+) = all-trans-4,4'-diaponeurosporene + 3 FADH2. The protein operates within carotenoid biosynthesis; staphyloxanthin biosynthesis; staphyloxanthin from farnesyl diphosphate: step 2/5. Its function is as follows. Involved in the biosynthesis of the yellow-orange carotenoid staphyloxanthin, which plays a role in the virulence via its protective function against oxidative stress. Catalyzes three successive dehydrogenation reactions that lead to the introduction of three double bonds into 4,4'-diapophytoene (dehydrosqualene), with 4,4'-diapophytofluene and 4,4'-diapo-zeta-carotene as intermediates, and 4,4'-diaponeurosporene (the major deep-yellow pigment in staphylococci strains) as the end product. This Staphylococcus haemolyticus (strain JCSC1435) protein is 4,4'-diapophytoene desaturase (4,4'-diaponeurosporene-forming).